Here is a 195-residue protein sequence, read N- to C-terminus: Probable GTP-binding protein EngB (195 aa).

The EngB-type G domain occupies Gly24–Leu195. GTP contacts are provided by residues Gly32–Ser39, Gly59–Thr63, Asp77–Gly80, Thr144–Asp147, and Tyr176–Ala178. The Mg(2+) site is built by Ser39 and Thr61.

This sequence belongs to the TRAFAC class TrmE-Era-EngA-EngB-Septin-like GTPase superfamily. EngB GTPase family. Mg(2+) is required as a cofactor.

Functionally, necessary for normal cell division and for the maintenance of normal septation. This Macrococcus caseolyticus (strain JCSC5402) (Macrococcoides caseolyticum) protein is Probable GTP-binding protein EngB.